The primary structure comprises 210 residues: Small ribosomal subunit protein uS4 (210 aa).

An S4 RNA-binding domain is found at 99–170 (RRLDNAVFRA…NLEAVVRRGV (72 aa)).

The protein belongs to the universal ribosomal protein uS4 family. As to quaternary structure, part of the 30S ribosomal subunit. Contacts protein S5. The interaction surface between S4 and S5 is involved in control of translational fidelity.

In terms of biological role, one of the primary rRNA binding proteins, it binds directly to 16S rRNA where it nucleates assembly of the body of the 30S subunit. With S5 and S12 plays an important role in translational accuracy. The polypeptide is Small ribosomal subunit protein uS4 (Desulfotalea psychrophila (strain LSv54 / DSM 12343)).